We begin with the raw amino-acid sequence, 703 residues long: Centrosomal protein of 63 kDa (703 aa).

An N-acetylmethionine modification is found at Met-1. 4 coiled-coil regions span residues Glu-22 to Glu-199, Met-242 to Val-306, Leu-353 to Met-533, and His-676 to Lys-703. Position 278 is a phosphoserine (Ser-278).

This sequence belongs to the CEP63 family. As to quaternary structure, interacts with CEP152 and CDK1; these interactions recruit both ligands to centrosomes. Interacts with CDK2, CDK5RAP2, WDR62, CEP90, KIAA0753/moonraker and CCDC14. CEP63, CDK5RAP2, CEP152, WDR62 are proposed to form a stepwise assembled complex at the centrosome forming a ring near parental centrioles. Interacts with CCDC57; the interaction is required for their location to proximal end of centrioles. Interacts with FXR1; promoting its stabilization. (Microbial infection) Interacts with zika virus serine protease NS3; this interaction disorganizes the centrosome. In terms of processing, polyubiquitinated via 'Lys-48'-linked ubiquitin, leading to its degradation. Deubiquitinated by USP36, promoting its stabilization.

It localises to the cytoplasm. It is found in the cytoskeleton. Its subcellular location is the microtubule organizing center. The protein resides in the centrosome. The protein localises to the centriole. It localises to the centriolar satellite. Required for normal spindle assembly. Plays a key role in mother-centriole-dependent centriole duplication; the function seems also to involve CEP152, CDK5RAP2 and WDR62 through a stepwise assembled complex at the centrosome that recruits CDK2 required for centriole duplication. Reported to be required for centrosomal recruitment of CEP152; however, this function has been questioned. Also recruits CDK1 to centrosomes. Plays a role in DNA damage response. Following DNA damage, such as double-strand breaks (DSBs), is removed from centrosomes; this leads to the inactivation of spindle assembly and delay in mitotic progression. Promotes stabilization of FXR1 protein by inhibiting FXR1 ubiquitination. This Homo sapiens (Human) protein is Centrosomal protein of 63 kDa.